A 172-amino-acid chain; its full sequence is Large ribosomal subunit protein uL10 (172 aa).

This sequence belongs to the universal ribosomal protein uL10 family. In terms of assembly, part of the ribosomal stalk of the 50S ribosomal subunit. The N-terminus interacts with L11 and the large rRNA to form the base of the stalk. The C-terminus forms an elongated spine to which L12 dimers bind in a sequential fashion forming a multimeric L10(L12)X complex.

Forms part of the ribosomal stalk, playing a central role in the interaction of the ribosome with GTP-bound translation factors. This is Large ribosomal subunit protein uL10 from Idiomarina loihiensis (strain ATCC BAA-735 / DSM 15497 / L2-TR).